The primary structure comprises 31 residues: Large ribosomal subunit protein bL21 (31 aa).

Belongs to the bacterial ribosomal protein bL21 family. As to quaternary structure, part of the 50S ribosomal subunit. Contacts protein L20.

Functionally, this protein binds to 23S rRNA in the presence of protein L20. In Streptococcus thermophilus, this protein is Large ribosomal subunit protein bL21 (rplU).